A 67-amino-acid polypeptide reads, in one-letter code: Phycobilisome 7.8 kDa linker polypeptide, allophycocyanin-associated, core (67 aa).

Positions 1 to 56 (GRLFKITACVPSQTRIRTQRELQNTYFTKLVPYENWFREQQRIQKMGGKIVKVELA) constitute a CpcD-like domain.

It belongs to the phycobilisome linker protein family.

It localises to the cellular thylakoid membrane. In terms of biological role, rod linker protein, associated with allophycocyanin. Linker polypeptides determine the state of aggregation and the location of the disk-shaped phycobiliprotein units within the phycobilisome and modulate their spectroscopic properties in order to mediate a directed and optimal energy transfer. The chain is Phycobilisome 7.8 kDa linker polypeptide, allophycocyanin-associated, core (apcC) from Mastigocladus laminosus (Fischerella sp.).